The sequence spans 426 residues: Serine--tRNA ligase (426 aa).

Position 233–235 (233–235 (TAE)) interacts with L-serine. 264 to 266 (RSE) is an ATP binding site. Residue E287 coordinates L-serine. 351-354 (EISS) is an ATP binding site. L-serine is bound at residue S387.

This sequence belongs to the class-II aminoacyl-tRNA synthetase family. Type-1 seryl-tRNA synthetase subfamily. As to quaternary structure, homodimer. The tRNA molecule binds across the dimer.

It is found in the cytoplasm. It carries out the reaction tRNA(Ser) + L-serine + ATP = L-seryl-tRNA(Ser) + AMP + diphosphate + H(+). It catalyses the reaction tRNA(Sec) + L-serine + ATP = L-seryl-tRNA(Sec) + AMP + diphosphate + H(+). It participates in aminoacyl-tRNA biosynthesis; selenocysteinyl-tRNA(Sec) biosynthesis; L-seryl-tRNA(Sec) from L-serine and tRNA(Sec): step 1/1. Catalyzes the attachment of serine to tRNA(Ser). Is also able to aminoacylate tRNA(Sec) with serine, to form the misacylated tRNA L-seryl-tRNA(Sec), which will be further converted into selenocysteinyl-tRNA(Sec). The protein is Serine--tRNA ligase of Francisella philomiragia subsp. philomiragia (strain ATCC 25017 / CCUG 19701 / FSC 153 / O#319-036).